Here is a 414-residue protein sequence, read N- to C-terminus: 5-aminolevulinate synthase (414 aa).

Substrate is bound by residues R22, S133, and K152. The pyridoxal 5'-phosphate site is built by S185, H213, and T241. Residue K244 is part of the active site. K244 carries the N6-(pyridoxal phosphate)lysine modification. Pyridoxal 5'-phosphate contacts are provided by T273 and T274. Residue T359 coordinates substrate.

It belongs to the class-II pyridoxal-phosphate-dependent aminotransferase family. Homodimer. It depends on pyridoxal 5'-phosphate as a cofactor.

The enzyme catalyses succinyl-CoA + glycine + H(+) = 5-aminolevulinate + CO2 + CoA. The protein operates within porphyrin-containing compound metabolism; protoporphyrin-IX biosynthesis; 5-aminolevulinate from glycine: step 1/1. The polypeptide is 5-aminolevulinate synthase (hemA) (Rickettsia typhi (strain ATCC VR-144 / Wilmington)).